A 326-amino-acid chain; its full sequence is MQGSARDFLKPKLVESSQTGVNEFKVILEPLERGFGHTLGNAIRRTLLSSMTGFAVTEVVIDGVMHEFSTIDGVQEDVLDILLNLKEVSVVLNTVETAQVVIDKKGPCEITVADIETNGIDITTFNPDKVIATINDEGHMRMTLKITAGIGYDAAASRTDEASSIGGMQLDASFSPIKRVSFTVDAARVKQKVNLDKLNIMIETNGSVNAEVAIKRVATILQEQLSSFVELELVEEEVSLPTSEDFDPQLLAAVDELELTVRSANCLKAEQIYYIGDLIQKSEQDLLRTPNLGRKSLNEIKEVLTEKGLSLGTNIENWPPVDLMSE.

Residues 1–232 (MQGSARDFLK…EQLSSFVELE (232 aa)) are alpha N-terminal domain (alpha-NTD). Residues 246–326 (FDPQLLAAVD…NWPPVDLMSE (81 aa)) are alpha C-terminal domain (alpha-CTD).

It belongs to the RNA polymerase alpha chain family. Homodimer. The RNAP catalytic core consists of 2 alpha, 1 beta, 1 beta' and 1 omega subunit. When a sigma factor is associated with the core the holoenzyme is formed, which can initiate transcription.

The catalysed reaction is RNA(n) + a ribonucleoside 5'-triphosphate = RNA(n+1) + diphosphate. Its function is as follows. DNA-dependent RNA polymerase catalyzes the transcription of DNA into RNA using the four ribonucleoside triphosphates as substrates. This chain is DNA-directed RNA polymerase subunit alpha, found in Vesicomyosocius okutanii subsp. Calyptogena okutanii (strain HA).